The following is a 538-amino-acid chain: uncharacterized protein (538 aa).

Positions 1-13 are enriched in low complexity; it reads MYNNNSSTSSDSS. The interval 1 to 43 is disordered; that stretch reads MYNNNSSTSSDSSNSEEKANAQHASSTDSTSEHTDPAVADEGF. Transmembrane regions (helical) follow at residues 97–117, 134–154, 163–183, 194–214, 226–246, 254–274, 328–348, 367–387, 408–428, 434–454, 458–478, and 504–524; these read ILHV…SSVF, VALL…ILWA, KIPL…VAVA, FFSG…FADM, IFAC…GFLA, WTEY…LFMK, PIVF…YLLL, ALPY…IAYF, LPPM…LAWS, VHWI…LTIF, LIYL…ANTI, and GSLL…FFIF.

This sequence belongs to the major facilitator superfamily. CAR1 family.

It is found in the endoplasmic reticulum. It localises to the membrane. This is an uncharacterized protein from Schizosaccharomyces pombe (strain 972 / ATCC 24843) (Fission yeast).